We begin with the raw amino-acid sequence, 181 residues long: Ribulose bisphosphate carboxylase small subunit, chloroplastic 1 (181 aa).

Residues 1-57 (MASSIVSSAAAATRSNVAQASMVAPFTGLKSAASFPVTKKNNNVDITSLASNGGRVR) constitute a chloroplast transit peptide.

This sequence belongs to the RuBisCO small chain family. (Microbial infection) Binds to tobamovirus movement protein; this interaction seems required for viral systemic movement. In terms of assembly, heterohexadecamer of 8 large and 8 small subunits.

The protein localises to the plastid. It is found in the chloroplast. The protein resides in the cell junction. It localises to the plasmodesma. Its function is as follows. RuBisCO catalyzes two reactions: the carboxylation of D-ribulose 1,5-bisphosphate, the primary event in carbon dioxide fixation, as well as the oxidative fragmentation of the pentose substrate. Both reactions occur simultaneously and in competition at the same active site. Although the small subunit is not catalytic it is essential for maximal activity. Involved in antiviral defenses. The polypeptide is Ribulose bisphosphate carboxylase small subunit, chloroplastic 1 (Solanum lycopersicum (Tomato)).